Reading from the N-terminus, the 117-residue chain is uncharacterized protein (117 aa).

This is an uncharacterized protein from Encephalitozoon cuniculi (strain GB-M1) (Microsporidian parasite).